Reading from the N-terminus, the 344-residue chain is MSDNVGLSTPRGSGTSGYVQRNLAHFRPRDNYQSYPPKDFDSLKHQPRQPDKGLLEHDRKREVEVKVFELRDKLEEEGVEEDEIETRCDELRRKLLAEMERNQNSRGAPTGPRKNLKMHQVHELADAKIKESERLRQALKISRDYQEGSHWKKQEERLKGALEREANGDSSSMPPPPAPSGPSGGNDRGGDRDRGRGRGFGRRDRDEGRLNSRERRAPPRDWDRPPTPRGRGGRGGRGGRDREVDSYRGAAGRDRSRSRSPIRERSRTRSPVRDTGRSRSPVSERSLSRSRSRSRSYSRSRSPPRRRAADSQDRSLSRSRSRSYSRSPDRDRYREKYRDRDNRD.

Over residues M1 to V19 the composition is skewed to polar residues. Disordered stretches follow at residues M1 to D58 and E98 to D344. Basic and acidic residues predominate over residues K38–D58. The CWF21 domain occupies L55 to E98. A coiled-coil region spans residues E69–S105. Basic and acidic residues-rich tracts occupy residues Q120–N167, R188–P226, and G238–R277. The span at S288 to R306 shows a compositional bias: basic residues. Basic and acidic residues-rich tracts occupy residues R307–L316 and S327–D344.

Belongs to the CWC21 family. As to quaternary structure, associates with the NTC complex (or PRP19-associated complex). The NTC complex associates with the spliceosome after the release of the U1 and U4 snRNAs and forms the CWC spliceosome subcomplex reminiscent of a late-stage spliceosome.

It is found in the cytoplasm. It localises to the nucleus. Its function is as follows. Involved in pre-mRNA splicing. May function at or prior to the first catalytic step of splicing at the catalytic center of the spliceosome. May do so by stabilizing the catalytic center or the position of the RNA substrate. The chain is Pre-mRNA-splicing factor cwc-21 (cwc-21) from Neurospora crassa (strain ATCC 24698 / 74-OR23-1A / CBS 708.71 / DSM 1257 / FGSC 987).